Here is a 100-residue protein sequence, read N- to C-terminus: Urease subunit gamma (100 aa).

The protein belongs to the urease gamma subunit family. In terms of assembly, heterotrimer of UreA (gamma), UreB (beta) and UreC (alpha) subunits. Three heterotrimers associate to form the active enzyme.

The protein localises to the cytoplasm. The catalysed reaction is urea + 2 H2O + H(+) = hydrogencarbonate + 2 NH4(+). It functions in the pathway nitrogen metabolism; urea degradation; CO(2) and NH(3) from urea (urease route): step 1/1. The sequence is that of Urease subunit gamma from Methylibium petroleiphilum (strain ATCC BAA-1232 / LMG 22953 / PM1).